A 320-amino-acid polypeptide reads, in one-letter code: Ribose-phosphate pyrophosphokinase (320 aa).

41 to 43 (NDN) lines the ATP pocket. Mg(2+) is bound by residues His134 and Asp175. Lys198 is a catalytic residue. 2 residues coordinate D-ribose 5-phosphate: Arg200 and Asp224.

The protein belongs to the ribose-phosphate pyrophosphokinase family. Class I subfamily. Homohexamer. It depends on Mg(2+) as a cofactor.

It is found in the cytoplasm. The enzyme catalyses D-ribose 5-phosphate + ATP = 5-phospho-alpha-D-ribose 1-diphosphate + AMP + H(+). Its pathway is metabolic intermediate biosynthesis; 5-phospho-alpha-D-ribose 1-diphosphate biosynthesis; 5-phospho-alpha-D-ribose 1-diphosphate from D-ribose 5-phosphate (route I): step 1/1. Functionally, involved in the biosynthesis of the central metabolite phospho-alpha-D-ribosyl-1-pyrophosphate (PRPP) via the transfer of pyrophosphoryl group from ATP to 1-hydroxyl of ribose-5-phosphate (Rib-5-P). This chain is Ribose-phosphate pyrophosphokinase, found in Deinococcus radiodurans (strain ATCC 13939 / DSM 20539 / JCM 16871 / CCUG 27074 / LMG 4051 / NBRC 15346 / NCIMB 9279 / VKM B-1422 / R1).